Reading from the N-terminus, the 343-residue chain is MLTERQLLILQTIIDDFIGSAQPVGSRTLAKKDEITFSSATIRNEMADLEELGFIEKTHSSSGRIPSEKGYRFYVDHLLAPQRLSAEEIVQIKDLFAERIFEAEKVAQQSAQILSELTNYTAIVLGPKLSTNKLKNVQIIPLGRKTAVAIIVTDTGHVQSKTITVPESVDLSDLEKMVNILNEKLFGVPMVELHNKIVKEVVTVLHKYVHNYDSAMKILDGTFQVPLSEKIYFGGKANMLAQPEFHDIQKVRSLLEMIDNEAEFYDILRKKQVGIQVNIGRENSSMAMEDCSLISATYSVGEEQLGTIAILGPTRMHYARVITLLQLFTKHFTEGLNGLYKSK.

This sequence belongs to the HrcA family.

In terms of biological role, negative regulator of class I heat shock genes (grpE-dnaK-dnaJ and groELS operons). Prevents heat-shock induction of these operons. The sequence is that of Heat-inducible transcription repressor HrcA from Bacillus cytotoxicus (strain DSM 22905 / CIP 110041 / 391-98 / NVH 391-98).